We begin with the raw amino-acid sequence, 102 residues long: Small ribosomal subunit protein uS10 (102 aa).

The protein belongs to the universal ribosomal protein uS10 family. Part of the 30S ribosomal subunit.

In terms of biological role, involved in the binding of tRNA to the ribosomes. This chain is Small ribosomal subunit protein uS10, found in Oenococcus oeni (strain ATCC BAA-331 / PSU-1).